The following is a 354-amino-acid chain: 3'-5' exonuclease (354 aa).

A disordered region spans residues 1–120; that stretch reads MERFLTKMPI…PSPEKEKPEK (120 aa). 2 stretches are compositionally biased toward basic and acidic residues: residues 13–30 and 37–50; these read KANEVPKKEAVAKKETPK and KKDTPKELKDKENA. Residues 59–70 show a composition bias toward basic residues; that stretch reads TKGRPGRPAAKR. The segment covering 71–91 has biased composition (basic and acidic residues); it reads KNLDTPDVKDEKIAMEEENPP. Phosphoserine occurs at positions 104, 110, and 112. Residues 149–314 enclose the 3'-5' exonuclease domain; sequence WVEKQKDDVV…GQVIYRELER (166 aa). Mg(2+) contacts are provided by D163, E165, and D301.

It belongs to the WRNexo family.

Its subcellular location is the nucleus. Has exonuclease activity on both single-stranded and duplex templates bearing overhangs, but not blunt ended duplex DNA, and cleaves in a 3'-5' direction. Essential for the formation of DNA replication focal centers. Has an important role in maintaining genome stability. This chain is 3'-5' exonuclease, found in Drosophila simulans (Fruit fly).